The sequence spans 225 residues: Thymidylate kinase (225 aa).

ATP is bound at residue G15 to S22.

Belongs to the thymidylate kinase family.

It carries out the reaction dTMP + ATP = dTDP + ADP. In terms of biological role, phosphorylation of dTMP to form dTDP in both de novo and salvage pathways of dTTP synthesis. The sequence is that of Thymidylate kinase from Protochlamydia amoebophila (strain UWE25).